The following is a 148-amino-acid chain: Snaclec B2 (148 aa).

Positions 1-24 are cleaved as a signal peptide; it reads MGRLISVSFGLLVVFLSLSGTGAA. Cystine bridges form between Cys-27–Cys-38, Cys-55–Cys-144, and Cys-121–Cys-136. In terms of domain architecture, C-type lectin spans 34-145; sequence YDQHCYKVFD…CRLLGHFVCK (112 aa).

It belongs to the snaclec family. Heterodimer; disulfide-linked. As to expression, expressed by the venom gland.

It localises to the secreted. Functionally, interferes with one step of hemostasis (modulation of platelet aggregation, or coagulation cascade, for example). The polypeptide is Snaclec B2 (Macrovipera lebetinus (Levantine viper)).